The chain runs to 696 residues: Lutropin-choriogonadotropic hormone receptor (696 aa).

Positions 1-27 (MRRRSLALRLLLALLLLPPPLPQTLLG) are cleaved as a signal peptide. Over 28-358 (APCPEPCSCR…AFNPCEDIMG (331 aa)) the chain is Extracellular. Asn99 carries an N-linked (GlcNAc...) asparagine glycan. LRR repeat units lie at residues 122–147 (LPRLKYLSICNTGIRKLPDVTKIFSS), 149–171 (FNFILEICDNLHITTVPANAFQG), 172–196 (MNNESITLKLYGNGFEEIQSHAFNG), 198–220 (TLISLELKENAHLKKMHNDAFRG), 221–244 (ARGPSILDISSTKLQALPSYGLES), and 250–271 (ATSSYSLKKLPSREKFTNLLDA). 2 N-linked (GlcNAc...) asparagine glycosylation sites follow: Asn174 and Asn195. Asn291, Asn299, and Asn313 each carry an N-linked (GlcNAc...) asparagine glycan. Tyr331 is subject to Sulfotyrosine. Residues 359–386 (YDFLRVLIWLINILAIMGNVTVLFVLLT) form a helical membrane-spanning segment. At 387–395 (SHYKLTVPR) the chain is on the cytoplasmic side. The helical transmembrane segment at 396 to 418 (FLMCNLSFADFCMGLYLLLIASV) threads the bilayer. At 419 to 439 (DAQTKGQYYNHAIDWQTGNGC) the chain is on the extracellular side. The cysteines at positions 439 and 514 are disulfide-linked. A helical transmembrane segment spans residues 440-462 (SVAGFFTVFASELSVYTLTVITL). At 463–482 (ERWHTITYAIQLDQKLRLRH) the chain is on the cytoplasmic side. The chain crosses the membrane as a helical span at residues 483–505 (AIPIMLGGWLFSTLIAMLPLVGV). At 506-525 (SSYMKVSICLPMDVETTLSQ) the chain is on the extracellular side. A helical membrane pass occupies residues 526–547 (VYILTILILNVVAFIIICACYI). At 548 to 570 (KIYFAVQNPELMATNKDTKIAKK) the chain is on the cytoplasmic side. Residues 571 to 594 (MAVLIFTDFTCMAPISFFAISAAL) traverse the membrane as a helical segment. Topologically, residues 595-605 (KVPLITVTNSK) are extracellular. A helical transmembrane segment spans residues 606 to 626 (VLLVLFYPVNSCANPFLYAIF). At 627 to 696 (TKAFRRDFFL…VMDKTCYKDC (70 aa)) the chain is on the cytoplasmic side. Residues Cys643 and Cys644 are each lipidated (S-palmitoyl cysteine).

It belongs to the G-protein coupled receptor 1 family. FSH/LSH/TSH subfamily. Sulfated.

Its subcellular location is the cell membrane. In terms of biological role, receptor for lutropin-choriogonadotropic hormone. The activity of this receptor is mediated by G proteins which activate adenylate cyclase. The polypeptide is Lutropin-choriogonadotropic hormone receptor (LHCGR) (Sus scrofa (Pig)).